We begin with the raw amino-acid sequence, 374 residues long: Type IV pilus assembly protein PilC (374 aa).

Transmembrane regions (helical) follow at residues 138-158 (AMTY…ILLI), 187-207 (EFLQ…GFTF), and 347-367 (IMAV…LPIF).

The protein belongs to the GSP F family. In terms of assembly, homotetramer. Interacts with PilB.

It localises to the cell inner membrane. Its function is as follows. Essential inner membrane component of the type IV pilus (T4P) that plays a role in surface and host cell adhesion, colonization, biofilm maturation, virulence, and twitching, a form of surface-associated motility facilitated by cycles of extension, adhesion, and retraction of T4P fibers. Controls both pilus assembly and disassembly and plays an important role in PilB localization to the complex and ATPase activity. The chain is Type IV pilus assembly protein PilC (pilC) from Pseudomonas aeruginosa (strain ATCC 15692 / DSM 22644 / CIP 104116 / JCM 14847 / LMG 12228 / 1C / PRS 101 / PAO1).